The sequence spans 158 residues: NAD(P)H-quinone oxidoreductase subunit J, chloroplastic (158 aa).

The protein belongs to the complex I 30 kDa subunit family. As to quaternary structure, NDH is composed of at least 16 different subunits, 5 of which are encoded in the nucleus.

It is found in the plastid. The protein resides in the chloroplast thylakoid membrane. It catalyses the reaction a plastoquinone + NADH + (n+1) H(+)(in) = a plastoquinol + NAD(+) + n H(+)(out). The enzyme catalyses a plastoquinone + NADPH + (n+1) H(+)(in) = a plastoquinol + NADP(+) + n H(+)(out). In terms of biological role, NDH shuttles electrons from NAD(P)H:plastoquinone, via FMN and iron-sulfur (Fe-S) centers, to quinones in the photosynthetic chain and possibly in a chloroplast respiratory chain. The immediate electron acceptor for the enzyme in this species is believed to be plastoquinone. Couples the redox reaction to proton translocation, and thus conserves the redox energy in a proton gradient. This chain is NAD(P)H-quinone oxidoreductase subunit J, chloroplastic, found in Amborella trichopoda.